Consider the following 215-residue polypeptide: GTP-binding nuclear protein Ran (215 aa).

The region spanning 6–170 is the Small GTPase Ran-type domain; sequence DIPTFKLVLV…LWLVRKLLGD (165 aa). GTP-binding positions include 17 to 24, 35 to 41, Gly67, 121 to 124, and 149 to 151; these read DGGTGKTT, EKKYVAT, NFVD, and SAK. The segment at 36–44 is switch-I; that stretch reads KKYVATLGV. A switch-II region spans residues 67–83; the sequence is GQEKFGGLRDGYYIQGQ. The interaction with RANBP1 stretch occupies residues 210-215; the sequence is DDDEDL.

Belongs to the small GTPase superfamily. Ran family. In terms of assembly, monomer. Interacts with RANGAP1, which promotes RAN-mediated GTP hydrolysis. Interacts with KPNB1. Interaction with KPNB1 inhibits RANGAP1-mediated stimulation of GTPase activity. Interacts with RCC1 which promotes the exchange of RAN-bound GDP by GTP. Interaction with KPNB1 inhibits RCC1-mediated exchange of RAN-bound GDP by GTP. Interacts (GTP-bound form) with TNPO1; the interaction is direct. Interacts with KPNB1 and with TNPO1; both inhibit RAN GTPase activity. Interacts (via C-terminus) with RANBP1, which alleviates the inhibition of RAN GTPase activity. Interacts with RANGRF, which promotes the release of bound guanine nucleotide. RANGRF and RCC1 compete for an overlapping binding site on RAN. Identified in a complex with KPNA2 and CSE1L; interaction with RANBP1 mediates dissociation of RAN from this complex. Interaction with both RANBP1 and KPNA2 promotes dissociation of the complex between RAN and KPNB1. Identified in a complex composed of RAN, RANGAP1 and RANBP1. Identified in a complex that contains TNPO1, RAN and RANBP1. Identified in a nuclear export complex with XPO1. Interaction with RANBP1 or RANBP2 induces a conformation change in the complex formed by XPO1 and RAN that triggers the release of the nuclear export signal of cargo proteins. Component of a nuclear export receptor complex composed of KPNB1, RAN, SNUPN and XPO1. Mg(2+) serves as cofactor.

The protein resides in the nucleus. It is found in the nucleus envelope. It localises to the cytoplasm. Its subcellular location is the cytosol. GTPase involved in nucleocytoplasmic transport, participating both to the import and the export from the nucleus of proteins and RNAs. Switches between a cytoplasmic GDP- and a nuclear GTP-bound state by nucleotide exchange and GTP hydrolysis. Nuclear import receptors such as importin beta bind their substrates only in the absence of GTP-bound RAN and release them upon direct interaction with GTP-bound RAN, while export receptors behave in the opposite way. Thereby, RAN controls cargo loading and release by transport receptors in the proper compartment and ensures the directionality of the transport. Interaction with RANBP1 induces a conformation change in the complex formed by XPO1 and RAN that triggers the release of the nuclear export signal of cargo proteins. RAN (GTP-bound form) triggers microtubule assembly at mitotic chromosomes and is required for normal mitotic spindle assembly and chromosome segregation. Required for normal progress through mitosis. This Onchocerca volvulus protein is GTP-binding nuclear protein Ran (ran-1).